A 327-amino-acid chain; its full sequence is L-lactate dehydrogenase (327 aa).

Residues V18, D39, K44, Y69, and 83-84 each bind NAD(+); that span reads GA. Substrate contacts are provided by residues Q86, R92, and 124–127; that span reads NPVD. Residues 122-124 and S147 each bind NAD(+); that span reads AAN. 152–155 contributes to the substrate binding site; sequence DSAR. 2 residues coordinate beta-D-fructose 1,6-bisphosphate: R157 and H172. The Proton acceptor role is filled by H179. At Y224 the chain carries Phosphotyrosine. Residue T233 participates in substrate binding.

This sequence belongs to the LDH/MDH superfamily. LDH family. Homotetramer.

The protein localises to the cytoplasm. It catalyses the reaction (S)-lactate + NAD(+) = pyruvate + NADH + H(+). Its pathway is fermentation; pyruvate fermentation to lactate; (S)-lactate from pyruvate: step 1/1. With respect to regulation, allosterically activated by fructose 1,6-bisphosphate (FBP). Functionally, catalyzes the conversion of lactate to pyruvate. This Streptococcus uberis (strain ATCC BAA-854 / 0140J) protein is L-lactate dehydrogenase.